A 323-amino-acid polypeptide reads, in one-letter code: Alpha-tubulin N-acetyltransferase 1 (323 aa).

Residues 1 to 190 (MEFPFDVDAL…NNFVIFEGFF (190 aa)) form the N-acetyltransferase domain. Lysine 56 carries the N6-acetyllysine; by autocatalysis modification. 124–137 (FYIHESVQRHGHGR) is a binding site for acetyl-CoA. Lysine 146 carries the N6-acetyllysine; by autocatalysis modification. 160–169 (SQKLLKFLNK) is an acetyl-CoA binding site. The interval 196 to 239 (PPAPSLRATRHSRAAAVDPTPTAPARKLPPKRAEGDIKPYSSSD) is disordered. The segment covering 209–220 (AAAVDPTPTAPA) has biased composition (low complexity). Residues 226 to 239 (KRAEGDIKPYSSSD) show a composition bias toward basic and acidic residues. An N6-acetyllysine; by autocatalysis mark is found at lysine 233 and lysine 244. The tract at residues 252–287 (PLNRAPRRATPPAHPPPRSSSLGNSPERGPLRPFVP) is disordered. Phosphoserine occurs at positions 272 and 276. Arginine 305 is subject to Asymmetric dimethylarginine. Phosphoserine is present on serine 315. Arginine 323 carries the omega-N-methylarginine modification.

Belongs to the acetyltransferase ATAT1 family. Component of the BBSome complex. Interacts with AP2 alpha-adaptins, including AP2A2, but not with AP1 gamma-adaptin (AP1G1/AP1G2); this interaction is required for efficient alpha-tubulin acetylation, hence clathrin-coated pits are sites of microtubule acetylation. Post-translationally, autoacetylation strongly increases tubulin acetylation.

The protein localises to the cytoplasm. Its subcellular location is the membrane. The protein resides in the clathrin-coated pit. It is found in the cell junction. It localises to the focal adhesion. The protein localises to the cell projection. Its subcellular location is the axon. The protein resides in the cytoskeleton. It is found in the spindle. The enzyme catalyses L-lysyl-[alpha-tubulin] + acetyl-CoA = N(6)-acetyl-L-lysyl-[alpha-tubulin] + CoA + H(+). Specifically acetylates 'Lys-40' in alpha-tubulin on the lumenal side of microtubules. Promotes microtubule destabilization and accelerates microtubule dynamics; this activity may be independent of acetylation activity. Acetylates alpha-tubulin with a slow enzymatic rate, due to a catalytic site that is not optimized for acetyl transfer. Enters the microtubule through each end and diffuses quickly throughout the lumen of microtubules. Acetylates only long/old microtubules because of its slow acetylation rate since it does not have time to act on dynamically unstable microtubules before the enzyme is released. Required for normal sperm flagellar function. Promotes directional cell locomotion and chemotaxis, through AP2A2-dependent acetylation of alpha-tubulin at clathrin-coated pits that are concentrated at the leading edge of migrating cells. May facilitate primary cilium assembly. This Macaca mulatta (Rhesus macaque) protein is Alpha-tubulin N-acetyltransferase 1.